The primary structure comprises 136 residues: Ribosome-binding factor A (136 aa).

It belongs to the RbfA family. Monomer. Binds 30S ribosomal subunits, but not 50S ribosomal subunits or 70S ribosomes.

It is found in the cytoplasm. In terms of biological role, one of several proteins that assist in the late maturation steps of the functional core of the 30S ribosomal subunit. Associates with free 30S ribosomal subunits (but not with 30S subunits that are part of 70S ribosomes or polysomes). Required for efficient processing of 16S rRNA. May interact with the 5'-terminal helix region of 16S rRNA. This chain is Ribosome-binding factor A, found in Yersinia enterocolitica serotype O:8 / biotype 1B (strain NCTC 13174 / 8081).